We begin with the raw amino-acid sequence, 336 residues long: Calcium uniporter protein 3, mitochondrial (336 aa).

A mitochondrion-targeting transit peptide spans 1–69; the sequence is MAMRKLLSKK…RFMHNSAMIR (69 aa). Helical transmembrane passes span 231–251 and 257–277; these read LWAG…LTFW and VMEP…YAFF. The Selectivity filter signature appears at 255–263; that stretch reads WDVMEPICF. Residue glutamate 259 participates in Ca(2+) binding.

It belongs to the MCU (TC 1.A.77) family.

Its subcellular location is the mitochondrion inner membrane. The catalysed reaction is Ca(2+)(in) = Ca(2+)(out). Mitochondrial inner membrane calcium uniporter that mediates calcium uptake into mitochondria. Constitutes a pore-forming and calcium-conducting subunit. Mitochondrial calcium homeostasis plays key roles in cellular physiology and regulates cell bioenergetics, cytoplasmic calcium signals and activation of cell death pathways. This Arabidopsis thaliana (Mouse-ear cress) protein is Calcium uniporter protein 3, mitochondrial.